The chain runs to 357 residues: MEENKQRVKSMINILQLVAPGTPLREGIDNVLRAQTGGLIVLGYNEQIKSIVDGGFHINCAFSPASLYELAKMDGALILNETGSKILIANAQLVPDSSIDSIETGMRHRTAERVAKQTGSLVVAISQRRNVITLYQGNLRYTLKDIGVILTKANQAIQTLEKYKAVWNDGITNLGILEFEEVVTMSEVVHVLHSVEMVLRIKNEILSYIHELGTEGRLIRLQLTELLADLEAEAALLIKDYHQEKTQDHHQILKKLQDLANTQLLEDSDLVKLLGYPGQTSLEESVTPRGYRITSKISRVPPLIIENLINRFKTLQGVCRATINELDDVEGIGEVRAKKIREGLKRIQEHLYMSRHN.

Residues 8–146 (VKSMINILQL…GNLRYTLKDI (139 aa)) form the DAC domain. ATP contacts are provided by residues glycine 75, leucine 93, and 106–110 (MRHRT).

Belongs to the DisA family. Homooctamer. Requires Mg(2+) as cofactor.

It catalyses the reaction 2 ATP = 3',3'-c-di-AMP + 2 diphosphate. Its function is as follows. Participates in a DNA-damage check-point that is active prior to asymmetric division when DNA is damaged. DisA forms globular foci that rapidly scan along the chromosomes during sporulation, searching for lesions. When a lesion is present, DisA pauses at the lesion site. This triggers a cellular response that culminates in a temporary block in sporulation initiation. In terms of biological role, also has diadenylate cyclase activity, catalyzing the condensation of 2 ATP molecules into cyclic di-AMP (c-di-AMP). c-di-AMP acts as a signaling molecule that couples DNA integrity with progression of sporulation. The rise in c-di-AMP level generated by DisA while scanning the chromosome, operates as a positive signal that advances sporulation; upon encountering a lesion, the DisA focus arrests at the damaged site and halts c-di-AMP synthesis. This chain is DNA integrity scanning protein DisA, found in Bacillus cereus (strain ATCC 14579 / DSM 31 / CCUG 7414 / JCM 2152 / NBRC 15305 / NCIMB 9373 / NCTC 2599 / NRRL B-3711).